The following is a 381-amino-acid chain: Ceropsin (381 aa).

Residues 1 to 62 (MSISMDAGPG…MNPLWHALLG (62 aa)) are Extracellular-facing. The N-linked (GlcNAc...) asparagine glycan is linked to asparagine 28. Residues 63–83 (FTIGVLGFISMMGNGMVIYIF) form a helical membrane-spanning segment. Topologically, residues 84–96 (MTTKNLKTPSNLL) are cytoplasmic. Residues 97–117 (VVNLAFSDFLMMCAMSPAMVI) form a helical membrane-spanning segment. Over 118 to 133 (NCYNETWVFGPFACEL) the chain is Extracellular. N-linked (GlcNAc...) asparagine glycosylation is present at asparagine 121. A disulfide bond links cysteine 131 and cysteine 208. The helical transmembrane segment at 134–154 (YGCAGSLFGCASIWTMTMIAF) threads the bilayer. The Cytoplasmic portion of the chain corresponds to 155-173 (DRYNVIVKGIAAKPMTNNG). The chain crosses the membrane as a helical span at residues 174 to 194 (ALLRILGIWAFSLAWTVAPFF). At 195–221 (GWNRYVPEGNMTACGTDYLTKDWFSRS) the chain is on the extracellular side. N-linked (GlcNAc...) asparagine glycosylation occurs at asparagine 204. A helical membrane pass occupies residues 222–242 (YIVVYSVFVYFAPLLLIVYSY). The Cytoplasmic segment spans residues 243–284 (YYIVQAVSAHEKAMREQAKKMNVASLRSSEAANTSTECKLAK). A helical transmembrane segment spans residues 285–305 (VALMTISLWFMAWTPYLVINY). Residues 306 to 316 (TGILESAPISP) lie on the Extracellular side of the membrane. The helical transmembrane segment at 317–339 (LATIWGSLFAKANAVYNPIVYGI) threads the bilayer. The Cytoplasmic portion of the chain corresponds to 340–381 (SHPKYQAALYKRFPVLQCHSTTTDEASSVASGTTVMEEKPTA).

The protein belongs to the G-protein coupled receptor 1 family. Opsin subfamily. As to expression, expressed bilaterally in dorsal and ventral anterior protocerebral cells and bilaterally in the dorsal posterior protocerebral and lateral posterior tritocerebral cells (at protein level). Expressed in the larval brain but not in the subesophageal ganglion or thoracic ganglion.

Its subcellular location is the membrane. In terms of biological role, visual pigments are the light-absorbing molecules that mediate vision. They consist of an apoprotein, opsin, covalently linked to cis-retinal. May play a role in photoperiodic photoreception. This chain is Ceropsin, found in Bombyx mori (Silk moth).